A 231-amino-acid chain; its full sequence is Large ribosomal subunit protein uL1 (231 aa).

This sequence belongs to the universal ribosomal protein uL1 family. As to quaternary structure, part of the 50S ribosomal subunit.

Binds directly to 23S rRNA. The L1 stalk is quite mobile in the ribosome, and is involved in E site tRNA release. Functionally, protein L1 is also a translational repressor protein, it controls the translation of the L11 operon by binding to its mRNA. In Francisella philomiragia subsp. philomiragia (strain ATCC 25017 / CCUG 19701 / FSC 153 / O#319-036), this protein is Large ribosomal subunit protein uL1.